A 311-amino-acid chain; its full sequence is Aspartate carbamoyltransferase catalytic subunit (311 aa).

Carbamoyl phosphate-binding residues include Arg55 and Thr56. An L-aspartate-binding site is contributed by Lys85. Positions 106, 135, and 138 each coordinate carbamoyl phosphate. L-aspartate contacts are provided by Arg168 and Arg230. Residues Leu268 and Pro269 each coordinate carbamoyl phosphate.

It belongs to the aspartate/ornithine carbamoyltransferase superfamily. ATCase family. In terms of assembly, heterododecamer (2C3:3R2) of six catalytic PyrB chains organized as two trimers (C3), and six regulatory PyrI chains organized as three dimers (R2).

It carries out the reaction carbamoyl phosphate + L-aspartate = N-carbamoyl-L-aspartate + phosphate + H(+). The protein operates within pyrimidine metabolism; UMP biosynthesis via de novo pathway; (S)-dihydroorotate from bicarbonate: step 2/3. Catalyzes the condensation of carbamoyl phosphate and aspartate to form carbamoyl aspartate and inorganic phosphate, the committed step in the de novo pyrimidine nucleotide biosynthesis pathway. This is Aspartate carbamoyltransferase catalytic subunit from Escherichia coli O139:H28 (strain E24377A / ETEC).